We begin with the raw amino-acid sequence, 277 residues long: Phosphoenolpyruvate synthase regulatory protein (277 aa).

157–164 (GVSRCGKT) is an ADP binding site.

The protein belongs to the pyruvate, phosphate/water dikinase regulatory protein family. PSRP subfamily.

It carries out the reaction [pyruvate, water dikinase] + ADP = [pyruvate, water dikinase]-phosphate + AMP + H(+). The enzyme catalyses [pyruvate, water dikinase]-phosphate + phosphate + H(+) = [pyruvate, water dikinase] + diphosphate. Functionally, bifunctional serine/threonine kinase and phosphorylase involved in the regulation of the phosphoenolpyruvate synthase (PEPS) by catalyzing its phosphorylation/dephosphorylation. The sequence is that of Phosphoenolpyruvate synthase regulatory protein from Escherichia fergusonii (strain ATCC 35469 / DSM 13698 / CCUG 18766 / IAM 14443 / JCM 21226 / LMG 7866 / NBRC 102419 / NCTC 12128 / CDC 0568-73).